Here is a 143-residue protein sequence, read N- to C-terminus: Transcriptional regulator MraZ (143 aa).

2 SpoVT-AbrB domains span residues 5–47 (QYEH…SLEE) and 76–119 (AVEC…SKEV).

It belongs to the MraZ family. Forms oligomers.

It is found in the cytoplasm. The protein localises to the nucleoid. The sequence is that of Transcriptional regulator MraZ from Thermoanaerobacter pseudethanolicus (strain ATCC 33223 / 39E) (Clostridium thermohydrosulfuricum).